Consider the following 227-residue polypeptide: Uridylate kinase (227 aa).

9–10 lines the ATP pocket; sequence GS. Glycine 44 contributes to the UMP binding site. ATP-binding residues include glycine 45 and arginine 49. Residues aspartate 66 and 114 to 120 each bind UMP; that span reads TVPGHTT. ATP contacts are provided by threonine 140, phenylalanine 146, and aspartate 149.

This sequence belongs to the UMP kinase family. As to quaternary structure, homohexamer.

The protein localises to the cytoplasm. The catalysed reaction is UMP + ATP = UDP + ADP. The protein operates within pyrimidine metabolism; CTP biosynthesis via de novo pathway; UDP from UMP (UMPK route): step 1/1. With respect to regulation, inhibited by UTP. Its function is as follows. Catalyzes the reversible phosphorylation of UMP to UDP. This Natronomonas pharaonis (strain ATCC 35678 / DSM 2160 / CIP 103997 / JCM 8858 / NBRC 14720 / NCIMB 2260 / Gabara) (Halobacterium pharaonis) protein is Uridylate kinase.